Reading from the N-terminus, the 343-residue chain is Replication initiation protein (343 aa).

Residues 42 to 61 (ERKRTKRRRGEHSTKPKCEN) form a disordered region.

Its function is as follows. Probably functions as an initiator for the IncI1 ColIb-P9 replicon. This is Replication initiation protein (repZ) from Escherichia coli.